A 470-amino-acid polypeptide reads, in one-letter code: BTB/POZ domain-containing protein 17 (470 aa).

Positions 1–18 (MRMKGLYVVPLLLALVES) are cleaved as a signal peptide. Residues 53–122 (SDTTLRIRTA…FYCGEISVNL (70 aa)) form the BTB domain. Residues 161-261 (VVSWYHYALR…ITPSQLFQIQ (101 aa)) form the BACK domain.

The protein localises to the secreted. The polypeptide is BTB/POZ domain-containing protein 17 (btbd17) (Xenopus laevis (African clawed frog)).